The primary structure comprises 93 residues: Small ribosomal subunit protein uS19 (93 aa).

Belongs to the universal ribosomal protein uS19 family.

In terms of biological role, protein S19 forms a complex with S13 that binds strongly to the 16S ribosomal RNA. The sequence is that of Small ribosomal subunit protein uS19 from Mycobacterium marinum (strain ATCC BAA-535 / M).